A 29-amino-acid chain; its full sequence is Potassium channel toxin alpha-KTx 8.3 (29 aa).

Intrachain disulfides connect Cys3/Cys19, Cys6/Cys24, and Cys10/Cys26.

It belongs to the short scorpion toxin superfamily. Potassium channel inhibitor family. Alpha-KTx 08 subfamily. Expressed by the venom gland.

It is found in the secreted. Functionally, specific and potent inhibitor of ClC-2/CLCN2 chloride channel. It slows ClC-2/CLCN2 activation by increasing the latency to first opening by nearly 8-fold but is unable to inhibit open channels, suggesting that this toxin inhibits channel activation gating. In Leiurus hebraeus (Hebrew deathstalker scorpion), this protein is Potassium channel toxin alpha-KTx 8.3.